Consider the following 177-residue polypeptide: Transmembrane protein 190 (177 aa).

The first 21 residues, 1 to 21 (MLGCGIPALGLLLLLQGSADG), serve as a signal peptide directing secretion. Residues 22–81 (NGIQGFFYPWSCEGDIWDRESCGGQAAIDSPNLCLRLRCCYRNGVCYHQRPDENVRRKHM) are Extracellular-facing. The P-type domain maps to 31-71 (WSCEGDIWDRESCGGQAAIDSPNLCLRLRCCYRNGVCYHQR). Cystine bridges form between cysteine 33/cysteine 61, cysteine 43/cysteine 60, and cysteine 55/cysteine 67. Residues 82–102 (WALVWTCSGLLLLSCSICLFW) traverse the membrane as a helical segment. Topologically, residues 103–177 (WAKRRDVLHM…EETEGEEEED (75 aa)) are cytoplasmic. Residues 131–177 (KHRGTKKTPSTGSVPVALSKESRDVEGGTEGEGTEEGEETEGEEEED) are disordered. Positions 157–177 (GGTEGEGTEEGEETEGEEEED) are enriched in acidic residues.

The protein resides in the membrane. The sequence is that of Transmembrane protein 190 (TMEM190) from Homo sapiens (Human).